Consider the following 613-residue polypeptide: MERSWYWRVALVVAVAILSIYQLVPSWFYFKLPPDQRNTEAYDTSVPGWAPDAKHHLNLGLDLQGGILLSMGVDVDRAVKTKVARRADEIGEFLKGKNVAFTGTKVVGGGAQVEVSAANPGEVKDAVLGSTGYSEEMYSPGGAPDGAVRFAFKDSVLRDFREKAVKQAEKVIRNRVDKWGVTEPDIKTKANNQIQVQLPGFKDPEKAKELLGRTAQLEFKIADDENPVLDQVRTQLPQCQGDRQGLSLPLPESGCWTVEPVELPSGGSRAATMVAANTRTELEKVITEKLNPLLDPQKNVVGIGEGQVGQGPIKTTYYRTYLLRAKTELTGDYIADAAVAIDQSDTLQRGRPVVSFKMSPEGARLMDKLTSENMRRRMATVLDDKVETAPYIQGRISSNGQITLGSGRNQQDMFDEANGIALVLKAGALPAPVTITEERTVGATLGPELVRKGTLAALVGLALVVVFMVVYYRGTGLVADVALALNGLLVLAVMSMIGTTLTLPGIAGFVLTLGMAVDANVLINERIREEMRAGRNVRQSVQLGYDRVFWTIVDSHVTTLVAGVVLFQYGSGPIRGFAVTLIIGLVASMFTSIVVTRVIMEYFTRHDTARLSV.

The next 6 helical transmembrane spans lie at 10-30 (ALVV…WFYF), 452-472 (KGTL…VVYY), 477-497 (LVAD…MSMI), 503-523 (LPGI…NVLI), 548-568 (VFWT…VLFQ), and 576-596 (GFAV…IVVT).

It belongs to the SecD/SecF family. SecD subfamily. Forms a complex with SecF. Part of the essential Sec protein translocation apparatus which comprises SecA, SecYEG and auxiliary proteins SecDF-YajC and YidC.

The protein localises to the cell inner membrane. Part of the Sec protein translocase complex. Interacts with the SecYEG preprotein conducting channel. SecDF uses the proton motive force (PMF) to complete protein translocation after the ATP-dependent function of SecA. This Anaeromyxobacter dehalogenans (strain 2CP-C) protein is Protein translocase subunit SecD.